The following is a 193-amino-acid chain: Ribosomal RNA small subunit methyltransferase G (193 aa).

S-adenosyl-L-methionine contacts are provided by residues Gly-64, Leu-69, 113–114 (IE), and Arg-126.

Belongs to the methyltransferase superfamily. RNA methyltransferase RsmG family.

The protein localises to the cytoplasm. The catalysed reaction is guanosine(527) in 16S rRNA + S-adenosyl-L-methionine = N(7)-methylguanosine(527) in 16S rRNA + S-adenosyl-L-homocysteine. Functionally, specifically methylates the N7 position of guanine in position 527 of 16S rRNA. The sequence is that of Ribosomal RNA small subunit methyltransferase G from Rickettsia massiliae (strain Mtu5).